Reading from the N-terminus, the 358-residue chain is Membrane-bound lytic murein transglycosylase C (358 aa).

An N-terminal signal peptide occupies residues 1–16 (MKKILALLVIAPLLVS). C17 is lipidated: N-palmitoyl cysteine. The S-diacylglycerol cysteine moiety is linked to residue C17.

This sequence belongs to the transglycosylase Slt family.

It localises to the cell outer membrane. It carries out the reaction Exolytic cleavage of the (1-&gt;4)-beta-glycosidic linkage between N-acetylmuramic acid (MurNAc) and N-acetylglucosamine (GlcNAc) residues in peptidoglycan, from either the reducing or the non-reducing ends of the peptidoglycan chains, with concomitant formation of a 1,6-anhydrobond in the MurNAc residue.. Its function is as follows. Murein-degrading enzyme. May play a role in recycling of muropeptides during cell elongation and/or cell division. The protein is Membrane-bound lytic murein transglycosylase C of Yersinia enterocolitica serotype O:8 / biotype 1B (strain NCTC 13174 / 8081).